The chain runs to 206 residues: Ribosomal RNA large subunit methyltransferase E (206 aa).

Positions 61, 63, 81, 97, and 122 each coordinate S-adenosyl-L-methionine. Catalysis depends on K162, which acts as the Proton acceptor.

The protein belongs to the class I-like SAM-binding methyltransferase superfamily. RNA methyltransferase RlmE family.

The protein localises to the cytoplasm. It carries out the reaction uridine(2552) in 23S rRNA + S-adenosyl-L-methionine = 2'-O-methyluridine(2552) in 23S rRNA + S-adenosyl-L-homocysteine + H(+). Functionally, specifically methylates the uridine in position 2552 of 23S rRNA at the 2'-O position of the ribose in the fully assembled 50S ribosomal subunit. The chain is Ribosomal RNA large subunit methyltransferase E from Neisseria meningitidis serogroup C (strain 053442).